The following is a 158-amino-acid chain: Endoribonuclease YbeY (158 aa).

Zn(2+) contacts are provided by His-119, His-123, and Asp-129.

It belongs to the endoribonuclease YbeY family. Requires Zn(2+) as cofactor.

The protein resides in the cytoplasm. Its function is as follows. Single strand-specific metallo-endoribonuclease involved in late-stage 70S ribosome quality control and in maturation of the 3' terminus of the 16S rRNA. This chain is Endoribonuclease YbeY, found in Chlamydia caviae (strain ATCC VR-813 / DSM 19441 / 03DC25 / GPIC) (Chlamydophila caviae).